A 144-amino-acid polypeptide reads, in one-letter code: Large ribosomal subunit protein uL13 (144 aa).

It belongs to the universal ribosomal protein uL13 family. Part of the 50S ribosomal subunit.

Functionally, this protein is one of the early assembly proteins of the 50S ribosomal subunit, although it is not seen to bind rRNA by itself. It is important during the early stages of 50S assembly. In Magnetococcus marinus (strain ATCC BAA-1437 / JCM 17883 / MC-1), this protein is Large ribosomal subunit protein uL13.